The chain runs to 321 residues: Phosphate acyltransferase (321 aa).

Belongs to the PlsX family. Homodimer. Probably interacts with PlsY.

Its subcellular location is the cytoplasm. It catalyses the reaction a fatty acyl-[ACP] + phosphate = an acyl phosphate + holo-[ACP]. The protein operates within lipid metabolism; phospholipid metabolism. In terms of biological role, catalyzes the reversible formation of acyl-phosphate (acyl-PO(4)) from acyl-[acyl-carrier-protein] (acyl-ACP). This enzyme utilizes acyl-ACP as fatty acyl donor, but not acyl-CoA. This Chlamydia trachomatis serovar L2 (strain ATCC VR-902B / DSM 19102 / 434/Bu) protein is Phosphate acyltransferase.